We begin with the raw amino-acid sequence, 252 residues long: Probable phosphatase SO_1652 (252 aa).

Positions 8, 10, 16, 41, 74, 102, 132, 193, and 195 each coordinate Zn(2+).

The protein belongs to the PHP family. Zn(2+) serves as cofactor.

The polypeptide is Probable phosphatase SO_1652 (Shewanella oneidensis (strain ATCC 700550 / JCM 31522 / CIP 106686 / LMG 19005 / NCIMB 14063 / MR-1)).